The following is a 436-amino-acid chain: ATP-dependent protease ATPase subunit HslU (436 aa).

ATP-binding positions include Val18, 60–65 (GVGKTE), Asp249, Glu314, and Arg386.

The protein belongs to the ClpX chaperone family. HslU subfamily. As to quaternary structure, a double ring-shaped homohexamer of HslV is capped on each side by a ring-shaped HslU homohexamer. The assembly of the HslU/HslV complex is dependent on binding of ATP.

Its subcellular location is the cytoplasm. Its function is as follows. ATPase subunit of a proteasome-like degradation complex; this subunit has chaperone activity. The binding of ATP and its subsequent hydrolysis by HslU are essential for unfolding of protein substrates subsequently hydrolyzed by HslV. HslU recognizes the N-terminal part of its protein substrates and unfolds these before they are guided to HslV for hydrolysis. In Rhizobium rhizogenes (strain K84 / ATCC BAA-868) (Agrobacterium radiobacter), this protein is ATP-dependent protease ATPase subunit HslU.